The chain runs to 98 residues: NADH-ubiquinone oxidoreductase chain 4L (98 aa).

A run of 3 helical transmembrane segments spans residues 1–21 (MPPIYINIILAYTASLVGLLM), 29–49 (SLLCLEGMMLSLFILATILSL), and 61–81 (IILLIFAGCETAVGLALLVMI).

Belongs to the complex I subunit 4L family. Core subunit of respiratory chain NADH dehydrogenase (Complex I) which is composed of 45 different subunits.

The protein localises to the mitochondrion inner membrane. It carries out the reaction a ubiquinone + NADH + 5 H(+)(in) = a ubiquinol + NAD(+) + 4 H(+)(out). In terms of biological role, core subunit of the mitochondrial membrane respiratory chain NADH dehydrogenase (Complex I) which catalyzes electron transfer from NADH through the respiratory chain, using ubiquinone as an electron acceptor. Part of the enzyme membrane arm which is embedded in the lipid bilayer and involved in proton translocation. The protein is NADH-ubiquinone oxidoreductase chain 4L (MT-ND4L) of Galeopterus variegatus (Malayan flying lemur).